A 445-amino-acid chain; its full sequence is Homoserine dehydrogenase (445 aa).

Phenylalanine 26, threonine 28, and valine 29 together coordinate NADPH. NAD(+) contacts are provided by valine 29 and alanine 58. Valine 29 is an NADP(+) binding site. Lysine 119 contributes to the NADPH binding site. Position 119 (lysine 119) interacts with NADP(+). The Na(+) site is built by glutamate 143, valine 146, glycine 148, and isoleucine 150. Positions 201 and 204 each coordinate NADP(+). L-homoserine is bound by residues glutamate 204 and aspartate 215. The Proton donor role is filled by lysine 219. Position 321 (glycine 321) interacts with NADPH. Glycine 321 serves as a coordination point for NAD(+). NADP(+) is bound at residue glycine 321. One can recognise an ACT domain in the interval 368–445; that stretch reads HLDMDVEDRV…INSVIRLERD (78 aa).

This sequence belongs to the homoserine dehydrogenase family. A metal cation is required as a cofactor.

It catalyses the reaction L-homoserine + NADP(+) = L-aspartate 4-semialdehyde + NADPH + H(+). The catalysed reaction is L-homoserine + NAD(+) = L-aspartate 4-semialdehyde + NADH + H(+). It participates in amino-acid biosynthesis; L-methionine biosynthesis via de novo pathway; L-homoserine from L-aspartate: step 3/3. The protein operates within amino-acid biosynthesis; L-threonine biosynthesis; L-threonine from L-aspartate: step 3/5. Feedback inhibition by threonine. In terms of biological role, catalyzes the conversion of L-aspartate-beta-semialdehyde (L-Asa) to L-homoserine (L-Hse), the third step in the biosynthesis of threonine and methionine from aspartate. This Corynebacterium glutamicum (strain ATCC 13032 / DSM 20300 / JCM 1318 / BCRC 11384 / CCUG 27702 / LMG 3730 / NBRC 12168 / NCIMB 10025 / NRRL B-2784 / 534) protein is Homoserine dehydrogenase (hom).